The following is a 330-amino-acid chain: Polygalacturonase inhibitor 2 (330 aa).

The N-terminal stretch at 1 to 21 (MDKTMTLFLLLSTLLLTTSLA) is a signal peptide. 2 cysteine pairs are disulfide-bonded: Cys25–Cys55 and Cys56–Cys63. LRR repeat units lie at residues 69-93 (NHRV…VGDL), 94-117 (PYLT…TIAK), 118-141 (LKNL…FLSQ), 142-166 (LKNL…LSSL), 167-192 (RKLE…TFSG), 194-215 (VPSL…LGNP), 217-237 (FYRI…LFGA), 238-260 (KKTT…KVKL), 261-285 (AKTL…WSKA), and 287-308 (FQLL…EYIQ). Residues Asn106, Asn120, and Asn130 are each glycosylated (N-linked (GlcNAc...) asparagine). Residue Asn291 is glycosylated (N-linked (GlcNAc...) asparagine). Cystine bridges form between Cys298–Cys320 and Cys322–Cys329.

It belongs to the polygalacturonase-inhibiting protein family.

The protein resides in the secreted. It localises to the cell wall. It is found in the membrane. Functionally, inhibitor of fungal polygalacturonase. It is an important factor for plant resistance to phytopathogenic fungi. This Arabidopsis thaliana (Mouse-ear cress) protein is Polygalacturonase inhibitor 2 (PGIP2).